Here is a 152-residue protein sequence, read N- to C-terminus: Small ribosomal subunit protein uS13 (152 aa).

The interval 133-152 is disordered; it reads GQHTKTTGRRGRTVGVSKKK.

The protein belongs to the universal ribosomal protein uS13 family.

Its subcellular location is the cytoplasm. Its function is as follows. Located at the top of the head of the 40S subunit, it contacts several helices of the 18S rRNA. This is Small ribosomal subunit protein uS13 (RpS18) from Spodoptera frugiperda (Fall armyworm).